A 505-amino-acid chain; its full sequence is Ion-translocating oxidoreductase complex subunit C (505 aa).

4Fe-4S ferredoxin-type domains follow at residues Glu381–Tyr410 and Lys420–Tyr449. The [4Fe-4S] cluster site is built by Cys390, Cys393, Cys396, Cys400, Cys429, Cys432, Cys435, and Cys439.

The protein belongs to the 4Fe4S bacterial-type ferredoxin family. RnfC subfamily. In terms of assembly, the complex is composed of six subunits: RnfA, RnfB, RnfC, RnfD, RnfE and RnfG. [4Fe-4S] cluster is required as a cofactor.

The protein localises to the cell inner membrane. In terms of biological role, part of a membrane-bound complex that couples electron transfer with translocation of ions across the membrane. This is Ion-translocating oxidoreductase complex subunit C from Buchnera aphidicola subsp. Baizongia pistaciae (strain Bp).